A 255-amino-acid chain; its full sequence is 5-oxoprolinase subunit A (255 aa).

Belongs to the LamB/PxpA family. Forms a complex composed of PxpA, PxpB and PxpC.

It carries out the reaction 5-oxo-L-proline + ATP + 2 H2O = L-glutamate + ADP + phosphate + H(+). In terms of biological role, catalyzes the cleavage of 5-oxoproline to form L-glutamate coupled to the hydrolysis of ATP to ADP and inorganic phosphate. This chain is 5-oxoprolinase subunit A, found in Clostridium kluyveri (strain ATCC 8527 / DSM 555 / NBRC 12016 / NCIMB 10680 / K1).